A 408-amino-acid polypeptide reads, in one-letter code: 8-amino-7-oxononanoate synthase (408 aa).

Residue Arg-20 coordinates substrate. Residue 119–120 (GY) participates in pyridoxal 5'-phosphate binding. His-144 contacts substrate. Residues Ser-190, His-218, and Thr-246 each coordinate pyridoxal 5'-phosphate. The residue at position 249 (Lys-249) is an N6-(pyridoxal phosphate)lysine. Residue Thr-372 coordinates substrate.

Belongs to the class-II pyridoxal-phosphate-dependent aminotransferase family. BioF subfamily. In terms of assembly, homodimer. It depends on pyridoxal 5'-phosphate as a cofactor.

It carries out the reaction 6-carboxyhexanoyl-[ACP] + L-alanine + H(+) = (8S)-8-amino-7-oxononanoate + holo-[ACP] + CO2. The protein operates within cofactor biosynthesis; biotin biosynthesis. Its function is as follows. Catalyzes the decarboxylative condensation of pimeloyl-[acyl-carrier protein] and L-alanine to produce 8-amino-7-oxononanoate (AON), [acyl-carrier protein], and carbon dioxide. In Leptothrix cholodnii (strain ATCC 51168 / LMG 8142 / SP-6) (Leptothrix discophora (strain SP-6)), this protein is 8-amino-7-oxononanoate synthase.